A 262-amino-acid chain; its full sequence is Hydroxyethylthiazole kinase (262 aa).

Met44 is a binding site for substrate. ATP-binding residues include Arg118 and Ser166. Gly193 serves as a coordination point for substrate.

The protein belongs to the Thz kinase family. Requires Mg(2+) as cofactor.

It carries out the reaction 5-(2-hydroxyethyl)-4-methylthiazole + ATP = 4-methyl-5-(2-phosphooxyethyl)-thiazole + ADP + H(+). It functions in the pathway cofactor biosynthesis; thiamine diphosphate biosynthesis; 4-methyl-5-(2-phosphoethyl)-thiazole from 5-(2-hydroxyethyl)-4-methylthiazole: step 1/1. Catalyzes the phosphorylation of the hydroxyl group of 4-methyl-5-beta-hydroxyethylthiazole (THZ). In Chlamydia abortus (strain DSM 27085 / S26/3) (Chlamydophila abortus), this protein is Hydroxyethylthiazole kinase.